The chain runs to 184 residues: ATP synthase subunit b, chloroplastic (184 aa).

The helical transmembrane segment at 27–49 (LATNLINLSVVLGVLIFFGKGVL) threads the bilayer.

This sequence belongs to the ATPase B chain family. F-type ATPases have 2 components, F(1) - the catalytic core - and F(0) - the membrane proton channel. F(1) has five subunits: alpha(3), beta(3), gamma(1), delta(1), epsilon(1). F(0) has four main subunits: a(1), b(1), b'(1) and c(10-14). The alpha and beta chains form an alternating ring which encloses part of the gamma chain. F(1) is attached to F(0) by a central stalk formed by the gamma and epsilon chains, while a peripheral stalk is formed by the delta, b and b' chains.

It is found in the plastid. The protein localises to the chloroplast thylakoid membrane. F(1)F(0) ATP synthase produces ATP from ADP in the presence of a proton or sodium gradient. F-type ATPases consist of two structural domains, F(1) containing the extramembraneous catalytic core and F(0) containing the membrane proton channel, linked together by a central stalk and a peripheral stalk. During catalysis, ATP synthesis in the catalytic domain of F(1) is coupled via a rotary mechanism of the central stalk subunits to proton translocation. In terms of biological role, component of the F(0) channel, it forms part of the peripheral stalk, linking F(1) to F(0). The protein is ATP synthase subunit b, chloroplastic of Nicotiana tabacum (Common tobacco).